The following is a 208-amino-acid chain: RxLR effector protein Avr1 (208 aa).

The first 22 residues, 1-22 (MGLMHRVLLLATFALLCMHAKA), serve as a signal peptide directing secretion. The short motif at 41–54 (RQLRTATMSDDEAR) is the RxLR-dEER element. The segment at 70 to 92 (KIESWIQNKVTDDFVLSELKLVR) is W1-motif. A linker region ln1 region spans residues 93–110 (LPGTSLADDPNFKLFQKF). The tract at residues 111–136 (KIGGWLEEKATTTKAWENLGLDSLPF) is W2-motif. The interval 137 to 157 (DQVSKIDEFKTYTQYVTVLNK) is Y-motif. The segment at 158–170 (KASKLDIDQWHGL) is linker region ln2. The segment at 170–208 (LLSGGSPEELMAKAMILRTLGRDVLERRVMLGGHVVVPF) is T-region.

It belongs to the RxLR effector family. Interacts with host exocyst component Sec5.

Its subcellular location is the secreted. It is found in the host cytoplasm. The protein resides in the host nucleus. The protein localises to the host peroxisome. In terms of biological role, secreted effector that acts as an elicitor of hypersensitive response (HR) specifically on plants carrying defense protein R1, through its interaction with this protein. Also acts as a virulence factor that promotes colonization and suppresses cell death induced by CRN2 as well as callose deposition, a hallmark of basal defense. Interacts with host exocyst component Sec5 and thereby disturbs vesicle trafficking, a cellular process that is important for basal defense. By targeting and stabilizing Sec5 in the cytoplasm, the exocyst complex is thus out of balance and not able to mediate the focal secretion of PR-1 and callose. This is RxLR effector protein Avr1 from Phytophthora infestans (strain T30-4) (Potato late blight agent).